A 343-amino-acid chain; its full sequence is Peptide methionine sulfoxide reductase msrA/msrB (343 aa).

Positions 21 to 174 are peptide methionine sulfoxide reductase A; the sequence is KVIYLAGGCF…PNGYCHIDLK (154 aa). Cys-29 (cysteine sulfenic acid (-SOH) intermediate) is an active-site residue. The MsrB domain maps to 191–314; it reads DEVLKKKLTQ…NSASLRFIPL (124 aa). The active-site Nucleophile is Cys-303.

It in the N-terminal section; belongs to the MsrA Met sulfoxide reductase family. This sequence in the C-terminal section; belongs to the MsrB Met sulfoxide reductase family.

The catalysed reaction is L-methionyl-[protein] + [thioredoxin]-disulfide + H2O = L-methionyl-(S)-S-oxide-[protein] + [thioredoxin]-dithiol. It catalyses the reaction [thioredoxin]-disulfide + L-methionine + H2O = L-methionine (S)-S-oxide + [thioredoxin]-dithiol. The enzyme catalyses L-methionyl-[protein] + [thioredoxin]-disulfide + H2O = L-methionyl-(R)-S-oxide-[protein] + [thioredoxin]-dithiol. In terms of biological role, has an important function as a repair enzyme for proteins that have been inactivated by oxidation. Catalyzes the reversible oxidation-reduction of methionine sulfoxide in proteins to methionine. This is Peptide methionine sulfoxide reductase msrA/msrB from Enterococcus faecalis (Streptococcus faecalis).